The primary structure comprises 763 residues: Transferrin receptor protein 1 (763 aa).

The Cytoplasmic portion of the chain corresponds to 1 to 67 (MMDQARSAFS…KPKRFNGRLC (67 aa)). The interval 1–67 (MMDQARSAFS…KPKRFNGRLC (67 aa)) is mediates interaction with SH3BP4. Phosphoserine is present on residues serine 10 and serine 19. Tyrosine 20 is modified (phosphotyrosine). The short motif at 20–23 (YTRF) is the Endocytosis signal element. Residue threonine 21 is modified to Phosphothreonine. Residue serine 24 is modified to Phosphoserine. Positions 58–61 (KPKR) match the Stop-transfer sequence motif. The S-palmitoyl cysteine moiety is linked to residue cysteine 67. A helical; Signal-anchor for type II membrane protein membrane pass occupies residues 68-88 (FAAIALVIFFLIGFMSGYLGY). At 89–763 (CKRVEQKEEC…GDIWNIDNEF (675 aa)) the chain is on the extracellular side. An O-linked (GalNAc...) threonine glycan is attached at threonine 104. The PA domain occupies 225-315 (SKPTEVSGKL…GTGDPYTPGF (91 aa)). N-linked (GlcNAc...) asparagine glycosylation is found at asparagine 253 and asparagine 319. A ligand-binding region spans residues 572–763 (RLDTYEALTQ…GDIWNIDNEF (192 aa)). A Cell attachment site motif is present at residues 649–651 (RGD). Residues asparagine 725 and asparagine 730 are each glycosylated (N-linked (GlcNAc...) asparagine).

Belongs to the peptidase M28 family. M28B subfamily. Homodimer; disulfide-linked. Binds one transferrin molecule per subunit. Interacts with SH3BP4. Interacts with STEAP3; facilitates TFRC endocytosis in erythroid precursor cells. In terms of processing, stearoylated by ZDHHC6 which inhibits TFRC-mediated activation of the JNK pathway and promotes mitochondrial fragmentation. Stearoylation does not affect iron uptake. N- and O-glycosylated, phosphorylated and palmitoylated.

It is found in the cell membrane. Its subcellular location is the melanosome. Its function is as follows. Cellular uptake of iron occurs via receptor-mediated endocytosis of ligand-occupied transferrin receptor into specialized endosomes. Endosomal acidification leads to iron release. The apotransferrin-receptor complex is then recycled to the cell surface with a return to neutral pH and the concomitant loss of affinity of apotransferrin for its receptor. Transferrin receptor is necessary for development of erythrocytes and the nervous system. Upon stimulation, positively regulates T and B cell proliferation through iron uptake. Acts as a lipid sensor that regulates mitochondrial fusion by regulating activation of the JNK pathway. When dietary levels of stearate (C18:0) are low, promotes activation of the JNK pathway, resulting in HUWE1-mediated ubiquitination and subsequent degradation of the mitofusin MFN2 and inhibition of mitochondrial fusion. When dietary levels of stearate (C18:0) are high, TFRC stearoylation inhibits activation of the JNK pathway and thus degradation of the mitofusin MFN2. Mediates uptake of NICOL1 into fibroblasts where it may regulate extracellular matrix production. This chain is Transferrin receptor protein 1 (Tfrc), found in Mus musculus (Mouse).